Here is a 127-residue protein sequence, read N- to C-terminus: Photosystem II reaction center Psb28 protein (127 aa).

The disordered stretch occupies residues 108–127; the sequence is LGYSQSQDSDQTEGADNQQA. Polar residues predominate over residues 109 to 127; the sequence is GYSQSQDSDQTEGADNQQA.

Belongs to the Psb28 family. In terms of assembly, part of the photosystem II complex.

The protein localises to the cellular thylakoid membrane. The protein is Photosystem II reaction center Psb28 protein of Synechococcus sp. (strain CC9605).